Here is a 216-residue protein sequence, read N- to C-terminus: Large ribosomal subunit protein uL1 (216 aa).

It belongs to the universal ribosomal protein uL1 family. Component of the large ribosomal subunit.

Its subcellular location is the cytoplasm. Functionally, component of the large ribosomal subunit. The ribosome is a large ribonucleoprotein complex responsible for the synthesis of proteins in the cell. The protein is Large ribosomal subunit protein uL1 (rpl10a) of Danio rerio (Zebrafish).